The sequence spans 382 residues: Dual-specificity RNA methyltransferase RlmN (382 aa).

Catalysis depends on Glu94, which acts as the Proton acceptor. The Radical SAM core domain occupies 100–336 (EANRGTLCVS…NTITRKTRGD (237 aa)). Residues Cys107 and Cys342 are joined by a disulfide bond. [4Fe-4S] cluster contacts are provided by Cys114, Cys118, and Cys121. Residues 168-169 (GE), Ser200, 222-224 (SLH), and Asn299 contribute to the S-adenosyl-L-methionine site. The active-site S-methylcysteine intermediate is the Cys342.

The protein belongs to the radical SAM superfamily. RlmN family. Requires [4Fe-4S] cluster as cofactor.

Its subcellular location is the cytoplasm. It catalyses the reaction adenosine(2503) in 23S rRNA + 2 reduced [2Fe-2S]-[ferredoxin] + 2 S-adenosyl-L-methionine = 2-methyladenosine(2503) in 23S rRNA + 5'-deoxyadenosine + L-methionine + 2 oxidized [2Fe-2S]-[ferredoxin] + S-adenosyl-L-homocysteine. The enzyme catalyses adenosine(37) in tRNA + 2 reduced [2Fe-2S]-[ferredoxin] + 2 S-adenosyl-L-methionine = 2-methyladenosine(37) in tRNA + 5'-deoxyadenosine + L-methionine + 2 oxidized [2Fe-2S]-[ferredoxin] + S-adenosyl-L-homocysteine. Its function is as follows. Specifically methylates position 2 of adenine 2503 in 23S rRNA and position 2 of adenine 37 in tRNAs. m2A2503 modification seems to play a crucial role in the proofreading step occurring at the peptidyl transferase center and thus would serve to optimize ribosomal fidelity. The sequence is that of Dual-specificity RNA methyltransferase RlmN from Legionella pneumophila (strain Paris).